Here is a 519-residue protein sequence, read N- to C-terminus: Putative tyrosine carboxypeptidase MATCAP2 (519 aa).

The disordered stretch occupies residues 63-103; it reads SKEEKKHRSQKRFSSASSKQHRKPSKSPSSSHSKDPSRMTA. His-330 serves as a coordination point for Zn(2+). Glu-331 acts as the Nucleophile in catalysis. His-335 and Glu-366 together coordinate Zn(2+).

It depends on Zn(2+) as a cofactor.

In terms of biological role, putative tyrosine carboxypeptidase. The sequence is that of Putative tyrosine carboxypeptidase MATCAP2 from Mus musculus (Mouse).